The following is a 478-amino-acid chain: Pentraxin-4 (478 aa).

The N-terminal stretch at 1 to 25 is a signal peptide; it reads MGCSWRKTLSFFLVFVPIYLHGASS. N-linked (GlcNAc...) asparagine glycans are attached at residues Asn-67 and Asn-91. The span at 208–222 shows a compositional bias: basic and acidic residues; the sequence is RDRQELRAASEHRGP. Positions 208-262 are disordered; it reads RDRQELRAASEHRGPPQDSSAPLQGRREPPASGSHRVLSGTAPKDPRQQAWSPQV. The Pentraxin (PTX) domain occupies 269–473; it reads VGPTLVFPNA…GFVQGANCTC (205 aa). The cysteines at positions 300 and 364 are disulfide-linked. Residues Asp-322, Asn-323, Glu-406, Gln-407, and Asp-408 each contribute to the Ca(2+) site.

Ca(2+) is required as a cofactor. In terms of tissue distribution, widely expressed at low levels with highest levels in small intestine, testis and brain. Very low expression in endothelial cells, monocytes, neutrophils and lymphocytes. Isoform 1 is not expressed in small intestine.

It is found in the secreted. The protein is Pentraxin-4 (PTX4) of Homo sapiens (Human).